Consider the following 338-residue polypeptide: Probable replication factor C subunit 2 (338 aa).

ATP is bound at residue 60 to 67 (GPPGTGKT).

Belongs to the activator 1 small subunits family. In terms of assembly, heteropentamer of various rfc subunits that forms a complex (RFC) with PCNA in the presence of ATP.

It is found in the nucleus. In terms of biological role, the elongation of primed DNA templates by DNA polymerase delta and epsilon requires the action of the accessory proteins PCNA and activator 1. This Dictyostelium discoideum (Social amoeba) protein is Probable replication factor C subunit 2 (rfc2).